The sequence spans 73 residues: Large ribosomal subunit protein bL31 (73 aa).

The Zn(2+) site is built by cysteine 16, cysteine 18, cysteine 36, and cysteine 39.

Belongs to the bacterial ribosomal protein bL31 family. Type A subfamily. In terms of assembly, part of the 50S ribosomal subunit. Zn(2+) serves as cofactor.

Binds the 23S rRNA. The polypeptide is Large ribosomal subunit protein bL31 (Myxococcus xanthus (strain DK1622)).